The chain runs to 595 residues: Proline--tRNA ligase (595 aa).

The protein belongs to the class-II aminoacyl-tRNA synthetase family. ProS type 1 subfamily. In terms of assembly, homodimer.

Its subcellular location is the cytoplasm. It carries out the reaction tRNA(Pro) + L-proline + ATP = L-prolyl-tRNA(Pro) + AMP + diphosphate. In terms of biological role, catalyzes the attachment of proline to tRNA(Pro) in a two-step reaction: proline is first activated by ATP to form Pro-AMP and then transferred to the acceptor end of tRNA(Pro). As ProRS can inadvertently accommodate and process non-cognate amino acids such as alanine and cysteine, to avoid such errors it has two additional distinct editing activities against alanine. One activity is designated as 'pretransfer' editing and involves the tRNA(Pro)-independent hydrolysis of activated Ala-AMP. The other activity is designated 'posttransfer' editing and involves deacylation of mischarged Ala-tRNA(Pro). The misacylated Cys-tRNA(Pro) is not edited by ProRS. This Treponema denticola (strain ATCC 35405 / DSM 14222 / CIP 103919 / JCM 8153 / KCTC 15104) protein is Proline--tRNA ligase.